We begin with the raw amino-acid sequence, 314 residues long: BTB/POZ domain-containing adapter for CUL3-mediated RhoA degradation protein 2 (314 aa).

The BTB domain maps to 32–100 (KYVRLNVGGS…LRDDTIALPK (69 aa)).

This sequence belongs to the BACURD family. Component of the BCR(TNFAIP1) E3 ubiquitin ligase complex, at least composed of CUL3, TNFAIP1/BACURD2 and RBX1.

Its subcellular location is the cytoplasm. The protein localises to the nucleus. It localises to the endosome. It functions in the pathway protein modification; protein ubiquitination. Its function is as follows. Substrate-specific adapter of a BCR (BTB-CUL3-RBX1) E3 ubiquitin-protein ligase complex involved in regulation of cytoskeleton structure. The BCR(TNFAIP1) E3 ubiquitin ligase complex mediates the ubiquitination of target proteins, leading to their degradation by the proteasome. In Gallus gallus (Chicken), this protein is BTB/POZ domain-containing adapter for CUL3-mediated RhoA degradation protein 2 (TNFAIP1).